The primary structure comprises 368 residues: Glutamate 5-kinase (368 aa).

K9 lines the ATP pocket. S49, D136, and N148 together coordinate substrate. ATP is bound by residues 168 to 169 and 210 to 216; these read TD and TGGMMTK. Positions 275 to 353 constitute a PUA domain; it reads AGIITIDNGA…ADIENVLGYE (79 aa).

This sequence belongs to the glutamate 5-kinase family.

It is found in the cytoplasm. It carries out the reaction L-glutamate + ATP = L-glutamyl 5-phosphate + ADP. It functions in the pathway amino-acid biosynthesis; L-proline biosynthesis; L-glutamate 5-semialdehyde from L-glutamate: step 1/2. Its function is as follows. Catalyzes the transfer of a phosphate group to glutamate to form L-glutamate 5-phosphate. In Haemophilus influenzae (strain PittEE), this protein is Glutamate 5-kinase.